Reading from the N-terminus, the 591-residue chain is Aspartate--tRNA(Asp/Asn) ligase (591 aa).

An L-aspartate-binding site is contributed by E175. The segment at 199–202 (QQYK) is aspartate. L-aspartate-binding residues include R221 and H450. Residue 221 to 223 (RDE) coordinates ATP. Position 484 (E484) interacts with ATP. R491 serves as a coordination point for L-aspartate. Residue 536-539 (GVDR) coordinates ATP.

It belongs to the class-II aminoacyl-tRNA synthetase family. Type 1 subfamily. In terms of assembly, homodimer.

The protein resides in the cytoplasm. The enzyme catalyses tRNA(Asx) + L-aspartate + ATP = L-aspartyl-tRNA(Asx) + AMP + diphosphate. Aspartyl-tRNA synthetase with relaxed tRNA specificity since it is able to aspartylate not only its cognate tRNA(Asp) but also tRNA(Asn). Reaction proceeds in two steps: L-aspartate is first activated by ATP to form Asp-AMP and then transferred to the acceptor end of tRNA(Asp/Asn). This Rhodopseudomonas palustris (strain ATCC BAA-98 / CGA009) protein is Aspartate--tRNA(Asp/Asn) ligase.